The following is a 1317-amino-acid chain: DNA-directed RNA polymerase subunit beta' (1317 aa).

The Zn(2+) site is built by cysteine 60, cysteine 62, cysteine 75, and cysteine 78. Mg(2+) is bound by residues aspartate 535, aspartate 537, and aspartate 539. 4 residues coordinate Zn(2+): cysteine 890, cysteine 967, cysteine 974, and cysteine 977.

It belongs to the RNA polymerase beta' chain family. In terms of assembly, the RNAP catalytic core consists of 2 alpha, 1 beta, 1 beta' and 1 omega subunit. When a sigma factor is associated with the core the holoenzyme is formed, which can initiate transcription. Mg(2+) serves as cofactor. Zn(2+) is required as a cofactor.

The enzyme catalyses RNA(n) + a ribonucleoside 5'-triphosphate = RNA(n+1) + diphosphate. Its function is as follows. DNA-dependent RNA polymerase catalyzes the transcription of DNA into RNA using the four ribonucleoside triphosphates as substrates. This Nocardia farcinica (strain IFM 10152) protein is DNA-directed RNA polymerase subunit beta'.